The sequence spans 269 residues: Type III pantothenate kinase (269 aa).

ATP is bound at residue 9 to 16; it reads DVGNTSVK. Substrate contacts are provided by residues Tyr-106 and 113 to 116; that span reads GADR. Asp-115 acts as the Proton acceptor in catalysis. Asp-137 is a binding site for K(+). An ATP-binding site is contributed by Thr-140. Thr-193 contributes to the substrate binding site.

Belongs to the type III pantothenate kinase family. In terms of assembly, homodimer. The cofactor is NH4(+). Requires K(+) as cofactor.

The protein resides in the cytoplasm. The catalysed reaction is (R)-pantothenate + ATP = (R)-4'-phosphopantothenate + ADP + H(+). It functions in the pathway cofactor biosynthesis; coenzyme A biosynthesis; CoA from (R)-pantothenate: step 1/5. Catalyzes the phosphorylation of pantothenate (Pan), the first step in CoA biosynthesis. The polypeptide is Type III pantothenate kinase (Lawsonia intracellularis (strain PHE/MN1-00)).